Reading from the N-terminus, the 337-residue chain is MEKSWMLWSFIERWLLALASWSWALCRISLLPLIVTFHLYGGIVLLLLIFVSIAGILYKFQDVLLYFPEQPSSSRLYVPMPTGIPHENIFIRTKDGVRLNLILVRYTGDNSPYCPTIIYFHGNAGNIGHRLPNALLMLVNLRVNLVLVDYRGYGKSEGEASEEGLYLDSEAVLDYVMTRPDLDKTKVFLFGRSLGGAVAIHLASENSHRISAIMVENTFLSIPHMASTLFSFFPMRYLPLWCYKNKFLSYRKISQCRMPSLFISGLSDQLIPPVMMKQLYELSPSRTKRLAIFPDGTHNDTWQCQGYFTALEQFIKEVIKSHSPEDMTKTSSNVTII.

Residues 37-57 (FHLYGGIVLLLLIFVSIAGIL) traverse the membrane as a helical; Signal-anchor for type II membrane protein segment. Active-site charge relay system residues include S193, D268, and H298. N-linked (GlcNAc...) asparagine glycosylation occurs at N299.

This sequence belongs to the serine esterase family.

The protein resides in the membrane. The protein is Protein ABHD13 of Mus musculus (Mouse).